Consider the following 182-residue polypeptide: MLFACALLALLGLATSCSFIVPRSEWRALPSECSSRLGHPVRYVVISHTAGSFCNSPDSCEQQARNVQHYHKNELGWCDVAYNFLIGEDGHVYEGRGWNIKGDHTGPIWNPMSIGITFMGNFMDRVPAKRALRAALNLLECGVSRGFLRSNYEVKGHRDVQSTLSPGDQLYQVIQSWEHYRE.

The signal sequence occupies residues 1 to 18 (MLFACALLALLGLATSCS). 3 disulfides stabilise this stretch: C17/C141, C33/C78, and C54/C60. The N-acetylmuramoyl-L-alanine amidase domain maps to 39-167 (HPVRYVVISH…RDVQSTLSPG (129 aa)).

The protein belongs to the N-acetylmuramoyl-L-alanine amidase 2 family. As to quaternary structure, homodimer; disulfide-linked. Interacts with HSPA1A; this interaction forms a cytotoxic complex that is released by lymphokine-activated killer cells. Interacts with HSPBP1; this interaction blocks the cytotoxic activity of the PGLYRP1-HSPA1A complex. As to expression, strongly expressed in spleen and lung. Also detected in brain and thymus. In the lung, expressed in the intraalveolar space, in the brain, expressed in the Purkinje cells of the cerebellum and in certain layers of neurons in the hippocampus. Also detected in cells filling the space within the intestinal villus.

It is found in the cytoplasm. The protein localises to the secreted. Innate immunity protein that plays several important functions in antimicrobial and antitumor defense systems. Acts as a pattern receptor that binds to murein peptidoglycans (PGN) of Gram-positive bacteria and thus provides bactericidal activity. Forms an equimolar complex with heat shock protein HSPA1A and induces programmed cell death through apoptosis and necroptosis in tumor cell lines by activating the TNFR1 receptor on the target cell membrane. In addition, acts in complex with the Ca(2+)-binding protein S100A4 as a chemoattractant able to induce lymphocyte movement. Mechanistically, this complex acts as a ligand of the chemotactic receptors CCR5 and CXCR3 which are present on the cells of the immune system. Also promotes the activation of lymphocytes that become able to kill virus-infected cells as well as tumor cells by modulating the spectrum of their target-cell specificity. Induction of cytotoxicity on monocyte surface requires interaction with TREM1 receptor. The protein is Peptidoglycan recognition protein 1 (Pglyrp1) of Mus musculus (Mouse).